The sequence spans 651 residues: Macrolide export ATP-binding/permease protein MacB (651 aa).

The 238-residue stretch at 2-239 folds into the ABC transporter domain; sequence IEIVNVTKTY…PQMPQGGMEA (238 aa). 38–45 is a binding site for ATP; it reads GASGSGKS. 4 helical membrane passes run 269-289, 532-552, 589-609, and 614-634; these read FLSVLGILVGVASVIAMMALG, IAAISLVVGGIGIMNIMLVSV, IIGIVVGVGVSVMLSAFAGWA, and MFSVVLATGFSVLIGLFFGLW.

This sequence belongs to the ABC transporter superfamily. Macrolide exporter (TC 3.A.1.122) family. Homodimer.

The protein localises to the cell inner membrane. In terms of biological role, non-canonical ABC transporter that contains transmembrane domains (TMD), which form a pore in the inner membrane, and an ATP-binding domain (NBD), which is responsible for energy generation. Confers resistance against macrolides. The polypeptide is Macrolide export ATP-binding/permease protein MacB (Chlorobaculum tepidum (strain ATCC 49652 / DSM 12025 / NBRC 103806 / TLS) (Chlorobium tepidum)).